Reading from the N-terminus, the 865-residue chain is DNA mismatch repair protein MutS (865 aa).

605-612 (GPNMAGKS) lines the ATP pocket. The segment at 814-833 (PEPLEAYKPKGNKQPLSDEE) is disordered.

It belongs to the DNA mismatch repair MutS family.

Its function is as follows. This protein is involved in the repair of mismatches in DNA. It is possible that it carries out the mismatch recognition step. This protein has a weak ATPase activity. The chain is DNA mismatch repair protein MutS from Halalkalibacterium halodurans (strain ATCC BAA-125 / DSM 18197 / FERM 7344 / JCM 9153 / C-125) (Bacillus halodurans).